The chain runs to 957 residues: Collagen alpha-1(I) chain (957 aa).

The segment at 1 to 957 (GPMGPSGPRG…PGPPGPPGPP (957 aa)) is disordered. Low complexity predominate over residues 23–33 (FPGEPGASGPM). The segment covering 45–59 (NGDDGEAGKPGRPGE) has biased composition (basic and acidic residues). Residue S87 is modified to Phosphoserine. Composition is skewed to low complexity over residues 95-113 (DAGP…PRGI) and 125-138 (PAGA…TGAA). Pro residues predominate over residues 140 to 152 (PPGPTGPAGPPGF). 2 stretches are compositionally biased toward low complexity: residues 186–210 (AGAA…RGPS) and 219–228 (SGPKGNSGEP). Over residues 277-286 (GERGGPGSRG) the composition is skewed to gly residues. 8 stretches are compositionally biased toward low complexity: residues 330 to 356 (KGIT…QDGR), 365 to 384 (ARGQ…AGEP), 426 to 453 (QGPA…PGEQ), 488 to 516 (PRGA…QGAP), 576 to 590 (AGPS…ARGA), 603 to 618 (AGFA…PGAK), 649 to 665 (SAGP…AGRV), and 707 to 731 (AGEK…QGIA). The residue at position 579 (S579) is a Phosphoserine. Composition is skewed to pro residues over residues 772–782 (PPGPMGPPGIA) and 818–833 (AGPP…PGPV). A compositionally biased stretch (low complexity) spans 854–868 (IGPVGARGAAGPQGP). A compositionally biased stretch (basic and acidic residues) spans 869 to 883 (RGDKGETGEQGDRGI). Residues 902-935 (PGEQGPSGASGPAGPRGPPGSAGSPGKDGINGIP) are compositionally biased toward low complexity. The segment covering 937-957 (PIGPPGPRPGPPGPPGPPGPP) has biased composition (pro residues).

This sequence belongs to the fibrillar collagen family. As to quaternary structure, trimers of one alpha 2(I) and two alpha 1(I) chains. Post-translationally, prolines at the third position of the tripeptide repeating unit (G-X-Y) are hydroxylated in some or all of the chains. Forms the fibrils of tendon, ligaments and bones. In bones, the fibrils are mineralized with calcium hydroxyapatite.

The protein resides in the secreted. The protein localises to the extracellular space. It is found in the extracellular matrix. In terms of biological role, type I collagen is a member of group I collagen (fibrillar forming collagen). The chain is Collagen alpha-1(I) chain from Hippopotamus amphibius (Hippopotamus).